The chain runs to 423 residues: Glucose-6-phosphate isomerase (423 aa).

Glutamate 279 functions as the Proton donor in the catalytic mechanism. Active-site residues include histidine 300 and lysine 413.

It belongs to the GPI family.

It localises to the cytoplasm. The enzyme catalyses alpha-D-glucose 6-phosphate = beta-D-fructose 6-phosphate. The protein operates within carbohydrate biosynthesis; gluconeogenesis. It functions in the pathway carbohydrate degradation; glycolysis; D-glyceraldehyde 3-phosphate and glycerone phosphate from D-glucose: step 2/4. In terms of biological role, catalyzes the reversible isomerization of glucose-6-phosphate to fructose-6-phosphate. In Acholeplasma laidlawii (strain PG-8A), this protein is Glucose-6-phosphate isomerase.